A 67-amino-acid polypeptide reads, in one-letter code: Large ribosomal subunit protein bL31 (67 aa).

The protein belongs to the bacterial ribosomal protein bL31 family. Type A subfamily. Part of the 50S ribosomal subunit.

Its function is as follows. Binds the 23S rRNA. The sequence is that of Large ribosomal subunit protein bL31 from Finegoldia magna (strain ATCC 29328 / DSM 20472 / WAL 2508) (Peptostreptococcus magnus).